Here is a 461-residue protein sequence, read N- to C-terminus: Autophagy-related protein 6 (461 aa).

Basic and acidic residues predominate over residues 75–88 (EEHGTDSSPDHDSS). 2 disordered regions span residues 75–94 (EEHGTDSSPDHDSSPDASLV) and 101–124 (EEPVPVSAPSPESSEADGPNPISG). Residues 103-113 (PVPVSAPSPES) are compositionally biased toward low complexity. Positions 194-286 (TKLRDSIQEC…VLNRLDHLRN (93 aa)) form a coiled coil.

Belongs to the beclin family.

In terms of biological role, required for cytoplasm to vacuole transport (Cvt) and autophagy. Also involved in endosome-to-Golgi retrograde transport. The chain is Autophagy-related protein 6 (ATG6) from Meyerozyma guilliermondii (strain ATCC 6260 / CBS 566 / DSM 6381 / JCM 1539 / NBRC 10279 / NRRL Y-324) (Yeast).